A 375-amino-acid polypeptide reads, in one-letter code: Sperm microtubule associated protein 2 (375 aa).

The segment at 1 to 78 (MGELGEHRAS…MAGEELPETS (78 aa)) is disordered. Positions 59–75 (EPEEEIPPEEMAGEELP) are enriched in acidic residues. THEG repeat units follow at residues 110-129 (AKGR…PKTN), 176-195 (TITV…PKRF), 214-233 (STLE…PKVR), 250-269 (AAQM…PRPP), 282-301 (PKPY…PKAL), 318-337 (VTKN…PKIR), and 352-371 (ASLV…PKYI). Serine 287 is modified (phosphoserine).

Interacts with CCT5. As to expression, testis specific (at protein level). Specifically expressed in spermatids; Sertoli cells maintain the level of expression in spermatids. If isolated spermatids are cultivated for 16 hours alone, the expression of THEG is down-regulated. May require signals from Sertoli cells to initiate changes in its gene expression through spermatogenesis.

Its subcellular location is the nucleus. Its function is as follows. May be involved (but not essential) in spermatogenesis. The protein is Sperm microtubule associated protein 2 of Mus musculus (Mouse).